We begin with the raw amino-acid sequence, 181 residues long: Cyclic AMP-dependent transcription factor ATF-3 (181 aa).

The disordered stretch occupies residues 76–96 (VTKSEVAPEEDERKRRRRERN). Residue Lys-78 forms a Glycyl lysine isopeptide (Lys-Gly) (interchain with G-Cter in SUMO2) linkage. One can recognise a bZIP domain in the interval 86-149 (DERKRRRRER…QHLIYMLNLH (64 aa)). A basic motif region spans residues 88-110 (RKRRRRERNKIAAAKCRNKKKEK). Residues 114–142 (LQKESEKLESVNAELKAQIEELKNEKQHL) are leucine-zipper. Thr-162 carries the post-translational modification Phosphothreonine. Lys-175 is covalently cross-linked (Glycyl lysine isopeptide (Lys-Gly) (interchain with G-Cter in SUMO2)).

This sequence belongs to the bZIP family. ATF subfamily. In terms of assembly, ATF3 alone can bind DNA, but it preferentially forms heteromeric complexes with JUN and JUNB and does not interact with FOS. As to expression, expressed in tissues containing skeletal muscle or smooth muscle. Expressed in cutaneous and muscular sensory neurons.

Its subcellular location is the nucleus. In terms of biological role, this protein binds the cAMP response element (CRE) (consensus: 5'-GTGACGT[AC][AG]-3'), a sequence present in many viral and cellular promoters. Represses transcription from promoters with ATF sites. It may repress transcription by stabilizing the binding of inhibitory cofactors at the promoter. This chain is Cyclic AMP-dependent transcription factor ATF-3 (Atf3), found in Rattus norvegicus (Rat).